Reading from the N-terminus, the 135-residue chain is Transmembrane protein 107 (135 aa).

4 helical membrane-spanning segments follow: residues 7–27, 55–75, 83–103, and 110–130; these read LVPA…TIFW, VALS…LSGV, ALLS…FVFH, and YWII…FLLL.

The protein resides in the membrane. In terms of biological role, may play a role in cilia formation and embryonic patterning. In Danio rerio (Zebrafish), this protein is Transmembrane protein 107 (tmem107).